A 465-amino-acid chain; its full sequence is MASISSLGVGSGLDLSSILDSLTAAQKATLTPISNQQSSFTAKLSAYGTLKSALTTFQTANTALSKADLFSATSSTTAFSATTAGNAIAGKYTISVTHLAQAQTLTTRTTRDDTKTAIATSDSKLTIQQGGDKDPITIDISAANSSLSGIRDAINNAKAGVSASIINVGNGDYRLSVTSNDTGLDNAMTLSVSGDDALQSFMGYDASASSNGMEVSVAAQNAQLTVNNVAIENSSNTISDALENITLNLNDVTTGNQTLTITQDTSKAQTAIKDWVNAYNSLIDTFSSLTKYTAVDAGADSQSSSNGALLGDSTLRTIQTQLKSMLSNTVSSSSYKTLAQIGITTDPSDGKLELDADKLTAALKKDASGVGALIVGDGKKTGITTTIGSNLTSWLSTTGIIKAATDGVSKTLNKLTKDYNAASDRIDAQVARYKEQFTQLDVLMTSLNSTSSYLTQQFENNSNSK.

A coiled-coil region spans residues 408 to 436 (VSKTLNKLTKDYNAASDRIDAQVARYKEQ).

Belongs to the FliD family. As to quaternary structure, homopentamer.

It localises to the secreted. The protein localises to the bacterial flagellum. Functionally, required for the morphogenesis and for the elongation of the flagellar filament by facilitating polymerization of the flagellin monomers at the tip of growing filament. Forms a capping structure, which prevents flagellin subunits (transported through the central channel of the flagellum) from leaking out without polymerization at the distal end. The protein is Flagellar hook-associated protein 2 (fliD) of Escherichia coli O157:H7.